We begin with the raw amino-acid sequence, 491 residues long: Probable glycine dehydrogenase (decarboxylating) subunit 2 (491 aa).

Lys273 carries the N6-(pyridoxal phosphate)lysine modification.

Belongs to the GcvP family. C-terminal subunit subfamily. The glycine cleavage system is composed of four proteins: P, T, L and H. In this organism, the P 'protein' is a heterodimer of two subunits. The cofactor is pyridoxal 5'-phosphate.

The enzyme catalyses N(6)-[(R)-lipoyl]-L-lysyl-[glycine-cleavage complex H protein] + glycine + H(+) = N(6)-[(R)-S(8)-aminomethyldihydrolipoyl]-L-lysyl-[glycine-cleavage complex H protein] + CO2. In terms of biological role, the glycine cleavage system catalyzes the degradation of glycine. The P protein binds the alpha-amino group of glycine through its pyridoxal phosphate cofactor; CO(2) is released and the remaining methylamine moiety is then transferred to the lipoamide cofactor of the H protein. The protein is Probable glycine dehydrogenase (decarboxylating) subunit 2 of Bacillus cereus (strain B4264).